A 385-amino-acid polypeptide reads, in one-letter code: Cytochrome b (385 aa).

A run of 4 helical transmembrane segments spans residues 32-52 (FGAL…FLAM), 76-98 (WLIR…IHVF), 113-133 (LWNL…LGYV), and 179-199 (FFSL…IHVA). Heme b-binding residues include His-82 and His-96. Heme b-binding residues include His-183 and His-197. His-202 lines the a ubiquinone pocket. Transmembrane regions (helical) follow at residues 226–246 (FIFK…YAVF), 290–310 (LGGV…PFIT), 322–342 (SKTI…WIGF), and 349–369 (YLML…SLAV).

This sequence belongs to the cytochrome b family. The main subunits of complex b-c1 are: cytochrome b, cytochrome c1 and the Rieske protein. Requires heme b as cofactor.

The protein localises to the mitochondrion inner membrane. Its function is as follows. Component of the ubiquinol-cytochrome c reductase complex (complex III or cytochrome b-c1 complex) that is part of the mitochondrial respiratory chain. The b-c1 complex mediates electron transfer from ubiquinol to cytochrome c. Contributes to the generation of a proton gradient across the mitochondrial membrane that is then used for ATP synthesis. This is Cytochrome b (MT-CYB) from Acanthamoeba castellanii (Amoeba).